We begin with the raw amino-acid sequence, 364 residues long: Trans-enoyl reductase ccsC (364 aa).

NADP(+) is bound at residue 52 to 55 (CDYK). Residue 141-148 (TGLATLGM) participates in substrate binding. NADP(+) is bound by residues 176–179 (SSSV), 199–202 (SPRN), tyrosine 217, and 264–265 (LE). 284 to 288 (GPALL) contributes to the substrate binding site. Position 353-354 (353-354 (VS)) interacts with NADP(+).

The protein belongs to the zinc-containing alcohol dehydrogenase family. As to quaternary structure, monomer.

The protein operates within mycotoxin biosynthesis. Trans-enoyl reductase; part of the gene cluster that mediates the biosynthesis of a family of the mycotoxins cytochalasins E and K. The hybrid PKS-NRPS synthetase ccsA and the enoyl reductase ccsC are responsible for fusion of phenylalanine with an octaketide backbone and subsequent release of the stable tetramic acid precursor. The polyketide synthase module (PKS) of the PKS-NRPS ccsA is responsible for the synthesis of the octaketide backbone. The downstream nonribosomal peptide synthetase (NRPS) amidates the carboxyl end of the octaketide with a phenylalanine. A reductase-like domain (R) at the C-terminus catalyzes the reductive release of the polyketide-amino acid intermediate. Because ccsA lacks a designated enoylreductase (ER) domain, the required activity is provided the enoyl reductase ccsC. Upon formation of the 11-membered carbocycle-fused perhydroisoindolone intermediate, a number of oxidative steps are required to afford the final cytochalasin E and K, including two hydroxylations at C17 and C18, one alcohol oxidation at C17, one epoxidation at C6 and C7 and two Baeyer-Villiger oxidations. The oxidative modification at C17, C18 and the C6-C7 epoxidation are likely to be catalyzed by the two cytochrome P450 oxygenases ccsD and ccsG. CcsD may be responsible for the epoxidation of the C6-C7 double bond. CcsG may be responsible for the successive oxidative modifications at C17 and C18. The double Baeyer-Villiger oxidations of ketocytochalasin to precytochalasin and cytochalasin Z(16) are among the final steps leading to cytochalasin E and K and are catalyzed by ccsB. The first oxygen insertion step follows that of the classic BVMO mechanism, generating the ester precytochalasin. Release of precytochalasin into an aqueous environment can generate the shunt product iso-precytochalasin through spontaneous isomerization. Alternatively, precytochalasin can undergo further oxidation by ccsB to yield the in-line carbonate-containing cytochalasin Z(16). Cytochalasin Z(16) is a precursor to cytochalasin E and cytochalasin K, whereas iso-precytochalasin is a precursor to cytochalasin Z(17) and rosellichalasin. The hydrolyase ccsE may catalyze hydrolysis of epoxide bond in cytochalasin E to afford cytochalasin K. The function of ccsF has not been assigned but it may play a role in post-PKS-NRPS biosynthetic step, resistance or transport of cytochalasins and related PKS-NRPS products. In Aspergillus clavatus (strain ATCC 1007 / CBS 513.65 / DSM 816 / NCTC 3887 / NRRL 1 / QM 1276 / 107), this protein is Trans-enoyl reductase ccsC.